Here is a 371-residue protein sequence, read N- to C-terminus: DNA-directed RNA polymerase subunit alpha (371 aa).

Residues 1–248 (MSVKYGKFEM…KHFEVFNQFN (248 aa)) are alpha N-terminal domain (alpha-NTD). Positions 264–371 (DQDELMDKLS…KELVKHEDAK (108 aa)) are alpha C-terminal domain (alpha-CTD).

The protein belongs to the RNA polymerase alpha chain family. In terms of assembly, homodimer. The RNAP catalytic core consists of 2 alpha, 1 beta, 1 beta' and 1 omega subunit. When a sigma factor is associated with the core the holoenzyme is formed, which can initiate transcription.

It carries out the reaction RNA(n) + a ribonucleoside 5'-triphosphate = RNA(n+1) + diphosphate. DNA-dependent RNA polymerase catalyzes the transcription of DNA into RNA using the four ribonucleoside triphosphates as substrates. The protein is DNA-directed RNA polymerase subunit alpha of Protochlamydia amoebophila (strain UWE25).